We begin with the raw amino-acid sequence, 276 residues long: Caspase-6 (276 aa).

Positions 1–5 (MTETD) are excised as a propeptide. Residues 25–27 (KRR) form a tri-arginine exosite region. Residue serine 62 is modified to Phosphoserine. Histidine 104 is an active-site residue. Residues 108-125 (NHVYAYDAKIEIQTLTGL) form a 130's region region. Cysteine 146 is an active-site residue. Positions 163–175 (HQTDKLDNVTQVD) are excised as a propeptide. Serine 239 carries the phosphoserine modification. 2 S-palmitoyl cysteine lipidation sites follow: cysteine 246 and cysteine 259.

This sequence belongs to the peptidase C14A family. Heterotetramer that consists of two anti-parallel arranged heterodimers, each one formed by a 18 kDa (p18) and a 11 kDa (p11) subunit. Interacts with BIRC6/bruce. Interacts with RIPK3. As to quaternary structure, heterotetramer that consists of two anti-parallel arranged heterodimers, each one formed by a 18 kDa (Caspase-6 subunit p18) and a 11 kDa (Caspase-6 subunit p11) subunit. Phosphorylated by NUAK1; phosphorylation inhibits self-activation. Phosphorylation at Ser-239 by AMP-activated protein kinase (PRKAA1 or PRKAA2) inhibits autocleavage, preventing caspase activation, thereby preventing hepatocyte apoptosis. In terms of processing, palmitoylation by ZDHHC17 blocks dimerization and subsequent activation, leading to inhibit the cysteine protease activity. Post-translationally, can be cleaved and activated by different caspases, depending on the context. Cleaved and activated by caspase-8 (CASP8) and subsequently by caspase-3 (CASP3). Can also undergo autoactivation by mediating autocleavage at Asp-162 and Asp-175, while it is not able to cleave its N-terminal disordered prodomain. Cleaved and activated by CASP1, possibly in the context of inflammation. Highly expressed in lung, liver, kidney, testis, and heart. Lower levels in spleen, skeletal muscle and brain. Expressed in neurons.

The protein resides in the cytoplasm. It localises to the nucleus. The catalysed reaction is Strict requirement for Asp at position P1 and has a preferred cleavage sequence of Val-Glu-His-Asp-|-.. With respect to regulation, during activation, the N-terminal disordered prodomain is removed by cleavage. Concomitantly, double cleavage gives rise to a large 18-kDa and a small 11-kDa subunit. The two large and two small subunits then assemble to form the active CASP6 complex. Can be cleaved and activated by different caspases, depending on the context. Cleaved and activated by caspase-8 (CASP8) and subsequently by caspase-3 (CASP3). Can also undergo autoactivation by mediating autocleavage at Asp-162 and Asp-175, while it is not able to cleave its N-terminal disordered prodomain. Intramolecular cleavage at Asp-175 is a prerequisite for CASP6 self-activation. Cleaved and activated by CASP1 in neurons, possibly in the context of inflammation. Phosphorylation at Ser-239 inhibits autocleavage, preventing caspase activation. Cysteine protease that plays essential roles in programmed cell death, axonal degeneration, development and innate immunity. Acts as a non-canonical executioner caspase during apoptosis: localizes in the nucleus and cleaves the nuclear structural protein NUMA1 and lamin A/LMNA thereby inducing nuclear shrinkage and fragmentation. Lamin-A/LMNA cleavage is required for chromatin condensation and nuclear disassembly during apoptotic execution. Acts as a regulator of liver damage by promoting hepatocyte apoptosis: in absence of phosphorylation by AMP-activated protein kinase (AMPK), catalyzes cleavage of BID, leading to cytochrome c release, thereby participating in nonalcoholic steatohepatitis. Cleaves PARK7/DJ-1 in cells undergoing apoptosis. Involved in intrinsic apoptosis by mediating cleavage of RIPK1. Furthermore, cleaves many transcription factors such as NF-kappa-B and cAMP response element-binding protein/CREBBP. Cleaves phospholipid scramblase proteins XKR4 and XKR9. In addition to apoptosis, involved in different forms of programmed cell death. Plays an essential role in defense against viruses by acting as a central mediator of the ZBP1-mediated pyroptosis, apoptosis, and necroptosis (PANoptosis), independently of its cysteine protease activity. PANoptosis is a unique inflammatory programmed cell death, which provides a molecular scaffold that allows the interactions and activation of machinery required for inflammasome/pyroptosis, apoptosis and necroptosis. Mechanistically, interacts with RIPK3 and enhances the interaction between RIPK3 and ZBP1, leading to ZBP1-mediated inflammasome activation and cell death. Plays an essential role in axon degeneration during axon pruning which is the remodeling of axons during neurogenesis but not apoptosis. Regulates B-cell programs both during early development and after antigen stimulation. In terms of biological role, (Microbial infection) Proteolytically cleaves the N protein of coronaviruses. The cleavage leads to two fragments and modulates coronavirus replication by regulating IFN signaling. The two fragments produced by the cleavage interact with IRF3 inhibiting its nuclear translocation after activation and reduce the expression of IFNB and IFN-stimulated genes. The sequence is that of Caspase-6 from Mus musculus (Mouse).